The chain runs to 313 residues: Aspartate carbamoyltransferase catalytic subunit (313 aa).

Arg-55 and Thr-56 together coordinate carbamoyl phosphate. Lys-83 contributes to the L-aspartate binding site. Residues Arg-105, His-138, and Gln-141 each contribute to the carbamoyl phosphate site. Residues Arg-171 and Arg-225 each coordinate L-aspartate. Carbamoyl phosphate is bound by residues Gly-266 and Pro-267.

Belongs to the aspartate/ornithine carbamoyltransferase superfamily. ATCase family. In terms of assembly, heterododecamer (2C3:3R2) of six catalytic PyrB chains organized as two trimers (C3), and six regulatory PyrI chains organized as three dimers (R2).

The enzyme catalyses carbamoyl phosphate + L-aspartate = N-carbamoyl-L-aspartate + phosphate + H(+). It participates in pyrimidine metabolism; UMP biosynthesis via de novo pathway; (S)-dihydroorotate from bicarbonate: step 2/3. Its function is as follows. Catalyzes the condensation of carbamoyl phosphate and aspartate to form carbamoyl aspartate and inorganic phosphate, the committed step in the de novo pyrimidine nucleotide biosynthesis pathway. The protein is Aspartate carbamoyltransferase catalytic subunit of Corynebacterium diphtheriae (strain ATCC 700971 / NCTC 13129 / Biotype gravis).